We begin with the raw amino-acid sequence, 680 residues long: Lipase 1 (680 aa).

A signal peptide spans Met-1–Ala-34. Residues Ala-35 to Lys-290 constitute a propeptide that is removed on maturation. A disordered region spans residues Lys-82–Gly-259. A compositionally biased stretch (basic and acidic residues) spans Leu-84–Ser-112. The segment covering Lys-125 to Leu-138 has biased composition (polar residues). The segment covering Ser-148–Asn-170 has biased composition (low complexity). Residues Gln-204–Glu-223 are compositionally biased toward polar residues. The span at Gln-224–Thr-234 shows a compositional bias: basic and acidic residues. Polar residues predominate over residues Leu-235 to Ser-246. Catalysis depends on Ser-408, which acts as the Nucleophile. Asp-600 serves as the catalytic Charge relay system. Ca(2+) is bound at residue Asp-638. The active-site Charge relay system is the His-639. Ca(2+) contacts are provided by Asp-641, Asp-646, and Asp-649.

Belongs to the AB hydrolase superfamily. Lipase family.

It localises to the secreted. The enzyme catalyses a triacylglycerol + H2O = a diacylglycerol + a fatty acid + H(+). The polypeptide is Lipase 1 (lip1) (Staphylococcus aureus (strain MSSA476)).